Consider the following 250-residue polypeptide: 2,3-bisphosphoglycerate-dependent phosphoglycerate mutase (250 aa).

Substrate-binding positions include 10-17, 23-24, Arg62, 89-92, Lys100, 116-117, and 185-186; these read RHGESQWN, TG, ERHY, RR, and GN. His11 (tele-phosphohistidine intermediate) is an active-site residue. Catalysis depends on Glu89, which acts as the Proton donor/acceptor.

This sequence belongs to the phosphoglycerate mutase family. BPG-dependent PGAM subfamily. As to quaternary structure, homodimer.

The enzyme catalyses (2R)-2-phosphoglycerate = (2R)-3-phosphoglycerate. It participates in carbohydrate degradation; glycolysis; pyruvate from D-glyceraldehyde 3-phosphate: step 3/5. In terms of biological role, catalyzes the interconversion of 2-phosphoglycerate and 3-phosphoglycerate. This chain is 2,3-bisphosphoglycerate-dependent phosphoglycerate mutase, found in Salmonella choleraesuis (strain SC-B67).